The primary structure comprises 383 residues: Chromatin structure-remodeling complex subunit SFH1 (383 aa).

The interval 61–80 (DDDEKVHSDNGKGEGEEVGH) is disordered. Positions 64–80 (EKVHSDNGKGEGEEVGH) are enriched in basic and acidic residues.

Belongs to the SNF5 family.

It localises to the nucleus. Part of the chromatin structure-remodeling complex (RSC) which is involved in transcription regulation and nucleosome positioning. RSC is responsible for the transfer of a histone octamer from a nucleosome core particle to naked DNA. The reaction requires ATP and involves an activated RSC-nucleosome intermediate. Remodeling reaction also involves DNA translocation, DNA twist and conformational change. As a reconfigurer of centromeric and flanking nucleosomes, RSC complex is required both for proper kinetochore function in chromosome segregation and, via a PKC1-dependent signaling pathway, for organization of the cellular cytoskeleton. This subunit is essential for mitotic growth and required for cell cycle progression. The polypeptide is Chromatin structure-remodeling complex subunit SFH1 (SFH1) (Eremothecium gossypii (strain ATCC 10895 / CBS 109.51 / FGSC 9923 / NRRL Y-1056) (Yeast)).